The following is a 221-amino-acid chain: Ribonuclease 3 (221 aa).

An RNase III domain is found at Met-1–Gly-123. Position 36 (Glu-36) interacts with Mg(2+). The active site involves Asp-40. Residues Asp-109 and Glu-112 each contribute to the Mg(2+) site. Residue Glu-112 is part of the active site. The region spanning Asp-148 to Val-217 is the DRBM domain.

The protein belongs to the ribonuclease III family. As to quaternary structure, homodimer. Mg(2+) is required as a cofactor.

Its subcellular location is the cytoplasm. It catalyses the reaction Endonucleolytic cleavage to 5'-phosphomonoester.. In terms of biological role, digests double-stranded RNA. Involved in the processing of primary rRNA transcript to yield the immediate precursors to the large and small rRNAs (23S and 16S). Processes some mRNAs, and tRNAs when they are encoded in the rRNA operon. Processes pre-crRNA and tracrRNA of type II CRISPR loci if present in the organism. The sequence is that of Ribonuclease 3 from Mesorhizobium japonicum (strain LMG 29417 / CECT 9101 / MAFF 303099) (Mesorhizobium loti (strain MAFF 303099)).